The sequence spans 143 residues: MLKMTVIDAKGLILGRLASSVAKQLLSGDEKVYIINAEQAIISGSRAATLREYRETRERGATEFGPYFPKRPDRILKRTIRGMLPYKRARGRDAMSRLKVYVGVPYELKGAETVTIPDADMRLLSSSRYVELGEVSQKMGSKF.

Belongs to the universal ribosomal protein uL13 family. As to quaternary structure, part of the 50S ribosomal subunit.

Functionally, this protein is one of the early assembly proteins of the 50S ribosomal subunit, although it is not seen to bind rRNA by itself. It is important during the early stages of 50S assembly. The chain is Large ribosomal subunit protein uL13 from Methanosarcina acetivorans (strain ATCC 35395 / DSM 2834 / JCM 12185 / C2A).